We begin with the raw amino-acid sequence, 121 residues long: Large ribosomal subunit protein bL12 (121 aa).

The protein belongs to the bacterial ribosomal protein bL12 family. In terms of assembly, homodimer. Part of the ribosomal stalk of the 50S ribosomal subunit. Forms a multimeric L10(L12)X complex, where L10 forms an elongated spine to which 2 to 4 L12 dimers bind in a sequential fashion. Binds GTP-bound translation factors.

Forms part of the ribosomal stalk which helps the ribosome interact with GTP-bound translation factors. Is thus essential for accurate translation. The chain is Large ribosomal subunit protein bL12 from Shewanella pealeana (strain ATCC 700345 / ANG-SQ1).